A 244-amino-acid polypeptide reads, in one-letter code: Biosynthetic peptidoglycan transglycosylase (244 aa).

The chain crosses the membrane as a helical span at residues 25 to 45; it reads LLLLLTAALLYQSWFLLHIVY.

It belongs to the glycosyltransferase 51 family.

It is found in the cell inner membrane. The catalysed reaction is [GlcNAc-(1-&gt;4)-Mur2Ac(oyl-L-Ala-gamma-D-Glu-L-Lys-D-Ala-D-Ala)](n)-di-trans,octa-cis-undecaprenyl diphosphate + beta-D-GlcNAc-(1-&gt;4)-Mur2Ac(oyl-L-Ala-gamma-D-Glu-L-Lys-D-Ala-D-Ala)-di-trans,octa-cis-undecaprenyl diphosphate = [GlcNAc-(1-&gt;4)-Mur2Ac(oyl-L-Ala-gamma-D-Glu-L-Lys-D-Ala-D-Ala)](n+1)-di-trans,octa-cis-undecaprenyl diphosphate + di-trans,octa-cis-undecaprenyl diphosphate + H(+). It functions in the pathway cell wall biogenesis; peptidoglycan biosynthesis. Functionally, peptidoglycan polymerase that catalyzes glycan chain elongation from lipid-linked precursors. This chain is Biosynthetic peptidoglycan transglycosylase, found in Nitrosomonas europaea (strain ATCC 19718 / CIP 103999 / KCTC 2705 / NBRC 14298).